Consider the following 215-residue polypeptide: MPGEATETVPVTEQEMQQPQVETGSGTESDSDDSVPELEEQDSAQTQTQQAQLAAAAEIDEEPVSKAKQSRSEKKARKAMSKLGLRQVTGVTRVTIRKSKNILFVITKPDVYKSPASDTYIVFGEAKIEDLSQQAQLAAAEKFKVPGETVSNVQENTQTPTVQEESEEEEVDETGVEVKDIELVMSQANVSRAKAVRALKNNNNDIVNAIMELTM.

The interval 1–81 (MPGEATETVP…SEKKARKAMS (81 aa)) is disordered. The span at 9–21 (VPVTEQEMQQPQV) shows a compositional bias: polar residues. Residues 29–42 (SDSDDSVPELEEQD) show a composition bias toward acidic residues. Over residues 43–57 (SAQTQTQQAQLAAAA) the composition is skewed to low complexity. Positions 70–135 (SRSEKKARKA…AKIEDLSQQA (66 aa)) constitute an NAC-A/B domain. A UBA domain is found at 176 to 213 (VEVKDIELVMSQANVSRAKAVRALKNNNNDIVNAIMEL).

It belongs to the NAC-alpha family.

In terms of biological role, may promote appropriate targeting of ribosome-nascent polypeptide complexes. This Oreochromis niloticus (Nile tilapia) protein is Nascent polypeptide-associated complex subunit alpha (naca).